A 343-amino-acid polypeptide reads, in one-letter code: uncharacterized protein (343 aa).

11 helical membrane passes run 13–33 (VILY…SMCG), 44–64 (LWGY…ATLD), 71–91 (MHPV…LFFI), 121–141 (ILLL…LTGL), 148–168 (NASL…YLIF), 177–197 (FLGI…GDFS), 203–223 (VAVT…LDTV), 244–264 (VGGF…ELPL), 269–289 (YALG…YIAI), 296–316 (MVGA…FIIL), and 320–340 (FSIM…ILYW). EamA domains lie at 55–192 (IFFG…YLLT) and 216–340 (FFWS…ILYW).

Belongs to the EamA transporter family.

The protein localises to the cell membrane. This is an uncharacterized protein from Methanothermobacter thermautotrophicus (strain ATCC 29096 / DSM 1053 / JCM 10044 / NBRC 100330 / Delta H) (Methanobacterium thermoautotrophicum).